We begin with the raw amino-acid sequence, 115 residues long: DNA-directed RNA polymerase II subunit RPB11-b2 (115 aa).

It belongs to the archaeal Rpo11/eukaryotic RPB11/RPC19 RNA polymerase subunit family. As to quaternary structure, component of the RNA polymerase II (Pol II) complex consisting of 12 subunits.

The protein resides in the nucleus. DNA-dependent RNA polymerase catalyzes the transcription of DNA into RNA using the four ribonucleoside triphosphates as substrates. Component of RNA polymerase II which synthesizes mRNA precursors and many functional non-coding RNAs. Pol II is the central component of the basal RNA polymerase II transcription machinery. It is composed of mobile elements that move relative to each other. RPB11 is part of the core element with the central large cleft. This is DNA-directed RNA polymerase II subunit RPB11-b2 (POLR2J3) from Homo sapiens (Human).